Here is a 1088-residue protein sequence, read N- to C-terminus: RNA-directed RNA polymerase (1088 aa).

Residues 501-687 (LSYGDVTRFL…AKRYIAGGKI (187 aa)) enclose the RdRp catalytic domain.

Belongs to the reoviridae RNA-directed RNA polymerase family. As to quaternary structure, interacts with VP3 (Potential). Interacts with VP2; this interaction activates VP1. Interacts with NSP5; this interaction is probably necessary for the formation of functional virus factories. Interacts with NSP2; this interaction is weak. Mg(2+) is required as a cofactor.

The protein localises to the virion. It carries out the reaction RNA(n) + a ribonucleoside 5'-triphosphate = RNA(n+1) + diphosphate. In terms of biological role, RNA-directed RNA polymerase that is involved in both transcription and genome replication. Together with VP3 capping enzyme, forms an enzyme complex positioned near the channels situated at each of the five-fold vertices of the core. Following infection, the outermost layer of the virus is lost, leaving a double-layered particle (DLP) made up of the core and VP6 shell. VP1 then catalyzes the transcription of fully conservative plus-strand genomic RNAs that are extruded through the DLP's channels into the cytoplasm where they function as mRNAs for translation of viral proteins. One copy of each of the viral (+)RNAs is also recruited during core assembly, together with newly synthesized polymerase complexes and VP2. The polymerase of these novo-formed particles catalyzes the synthesis of complementary minus-strands leading to dsRNA formation. To do so, the polymerase specifically recognizes and binds 4 bases 5'-UGUG-3' in the conserved 3'-sequence of plus-strand RNA templates. VP2 presumably activates the autoinhibited VP1-RNA complex to coordinate packaging and genome replication. Once dsRNA synthesis is complete, the polymerase switches to the transcriptional mode, thus providing secondary transcription. The protein is RNA-directed RNA polymerase of Homo sapiens (Human).